The chain runs to 223 residues: Peptidyl-prolyl cis-trans isomerase FKBP16-3, chloroplastic (223 aa).

A chloroplast-targeting transit peptide spans methionine 1–isoleucine 36. A thylakoid-targeting transit peptide spans alanine 37–alanine 76. In terms of domain architecture, PPIase FKBP-type spans glycine 124–proline 216.

The protein belongs to the FKBP-type PPIase family.

Its subcellular location is the plastid. It localises to the chloroplast thylakoid lumen. The enzyme catalyses [protein]-peptidylproline (omega=180) = [protein]-peptidylproline (omega=0). In terms of biological role, PPIases accelerate the folding of proteins. It catalyzes the cis-trans isomerization of proline imidic peptide bonds in oligopeptides. This is Peptidyl-prolyl cis-trans isomerase FKBP16-3, chloroplastic (FKBP16-3) from Arabidopsis thaliana (Mouse-ear cress).